Here is a 291-residue protein sequence, read N- to C-terminus: Transmembrane O-methyltransferase (291 aa).

A helical membrane pass occupies residues 31–51 (VGTMSPAIALAFLPLVVTLLV). S-adenosyl-L-methionine contacts are provided by residues glutamate 137, 139–140 (GT), serine 145, glutamate 163, and serine 193.

Belongs to the class I-like SAM-binding methyltransferase superfamily. Cation-dependent O-methyltransferase family. In terms of assembly, interacts with LHFPL5, PCDH15, TMC1, TMC2 and TMIE. Interacts directly with TMC1. The interaction of TOMT with TMC1 and TMC2 is required for the transportation of TMC1/2 into the stereocilia of hair cells.

The protein resides in the membrane. The protein localises to the cytoplasm. It is found in the endoplasmic reticulum. The catalysed reaction is a catechol + S-adenosyl-L-methionine = a guaiacol + S-adenosyl-L-homocysteine + H(+). Catalyzes the O-methylation, and thereby the inactivation, of catecholamine neurotransmitters and catechol hormones. Required for auditory function. Component of the cochlear hair cell's mechanotransduction (MET) machinery. Involved in the assembly of the asymmetric tip-link MET complex. Required for transportation of TMC1 and TMC2 proteins into the mechanically sensitive stereocilia of the hair cells. The function in MET is independent of the enzymatic activity. In Pan troglodytes (Chimpanzee), this protein is Transmembrane O-methyltransferase.